The sequence spans 307 residues: Murein tetrapeptide carboxypeptidase (307 aa).

S115 acts as the Nucleophile in catalysis. Residues E217 and H285 each act as charge relay system in the active site.

It belongs to the peptidase S66 family. As to quaternary structure, homodimer.

The protein resides in the cytoplasm. It carries out the reaction N-acetyl-D-glucosaminyl-N-acetylmuramoyl-L-alanyl-meso-2,6-diaminoheptanedioyl-D-alanine + H2O = N-acetyl-D-glucosaminyl-N-acetylmuramoyl-L-alanyl-meso-2,6-diaminoheptanedioate + D-alanine. It functions in the pathway cell wall biogenesis; peptidoglycan recycling. Functionally, releases the terminal D-alanine residue from the cytoplasmic disaccharide-tetrapeptide GlcNAc-MurNAc-L-Ala-gamma-D-Glu-meso-Dap-D-Ala, which is a murein turnover product. Probably also act on free tetrapetide. May be involved in murein recycling. The chain is Murein tetrapeptide carboxypeptidase from Pseudomonas aeruginosa (strain ATCC 15692 / DSM 22644 / CIP 104116 / JCM 14847 / LMG 12228 / 1C / PRS 101 / PAO1).